The chain runs to 537 residues: Putative cysteine ligase BshC (537 aa).

Residues 422–450 are a coiled coil; it reads IEKVEGMIEQQRRLNKDLLDEVAGNQNNI.

It belongs to the BshC family.

In terms of biological role, involved in bacillithiol (BSH) biosynthesis. May catalyze the last step of the pathway, the addition of cysteine to glucosamine malate (GlcN-Mal) to generate BSH. This chain is Putative cysteine ligase BshC, found in Staphylococcus aureus (strain Mu3 / ATCC 700698).